The chain runs to 289 residues: Serine/threonine-protein phosphatase Pgam5, mitochondrial (289 aa).

Residues 7-23 (FACGTGAGLAAYYLQRL) form a helical membrane-spanning segment.

This sequence belongs to the phosphoglycerate mutase family. BPG-dependent PGAM subfamily. In terms of assembly, interacts with Pk92B/ASK1.

The protein localises to the mitochondrion outer membrane. It catalyses the reaction O-phospho-L-seryl-[protein] + H2O = L-seryl-[protein] + phosphate. It carries out the reaction O-phospho-L-threonyl-[protein] + H2O = L-threonyl-[protein] + phosphate. In terms of biological role, displays phosphatase activity for serine/threonine residues, and dephosphorylates and activates Pk92B kinase. Has apparently no phosphoglycerate mutase activity. This is Serine/threonine-protein phosphatase Pgam5, mitochondrial from Drosophila simulans (Fruit fly).